A 31-amino-acid chain; its full sequence is Dermaseptin-7.1TR (31 aa).

Q31 bears the Glutamine amide mark.

As to expression, expressed by the skin glands.

It is found in the secreted. In terms of biological role, has antimicrobial activity. The protein is Dermaseptin-7.1TR of Phyllomedusa trinitatis (Trinidad leaf frog).